We begin with the raw amino-acid sequence, 352 residues long: Dysbindin (352 aa).

S11 bears the Phosphoserine mark. Residues 92–180 (TSLAELQEQL…AELDTEHAQK (89 aa)) are a coiled coil. Residues 243 to 256 (LMDLSDQEALDVFL) carry the Nuclear export signal motif. Residues 267–352 (SPGLEMESNP…SDQCDSTQDI (86 aa)) are disordered. Residues 274 to 285 (SNPSQNEMNLQI) show a composition bias toward polar residues. Residues 286–301 (PNPSESASQPPASPSA) show a composition bias toward low complexity. 2 positions are modified to phosphoserine: S340 and S343.

This sequence belongs to the dysbindin family. Interacts (via its coiled coil domain) with KXD1. Interacts with AP3B2, TRIM32, CMYA5, PI4K2 and RNF151. Interacts with the DNA-dependent protein kinase complex DNA-PK; the interaction phosphorylates DTNBP1 in vitro. Interacts directly in this complex with XRCC5 and XRCC6. Interacts with XPO1; the interaction exports DTNBP1 out of the nucleus. Component of the biogenesis of lysosome-related organelles complex 1 (BLOC-1) composed of at least BLOC1S1, BLOC1S2, BLOC1S3, BLOC1S4, BLOC1S5, BLOC1S6, DTNBP1/BLOC1S7 and SNAPIN/BLOC1S8. Interacts directly in the complex with BLOC1S5, BLOC1S6 and SNAPIN/BLOC1S8. The BLOC-1 complex associates with the AP-3 protein complex and membrane protein cargos. This BLOC-1 complex also associates with the BLOC-2 complex in endosomes. Binds to DTNA and DTNB but may not be a physiological binding partner. Interacts with AP3M1. Post-translationally, ubiquitinated by TRIM32. Ubiquitination leads to DTNBP1 degradation. Detected in hippocampus neurons (at protein level). Ubiquitously expressed. The highest expression is observed in testis, liver, kidney, brain, heart and lung. In the brain, found primarily in axon bundles and axon terminals, notably in the cerebellum and hippocampus. Expressed at lower levels in stomach, small intestine and skeletal muscle, where it is detected at the sarcolemma.

It localises to the cytoplasm. Its subcellular location is the cytoplasmic vesicle membrane. It is found in the cytoplasmic vesicle. The protein localises to the secretory vesicle. The protein resides in the synaptic vesicle membrane. It localises to the endosome membrane. Its subcellular location is the melanosome membrane. It is found in the nucleus. The protein localises to the postsynaptic density. The protein resides in the presynaptic cell membrane. It localises to the endoplasmic reticulum. Functionally, component of the BLOC-1 complex, a complex that is required for normal biogenesis of lysosome-related organelles (LRO), such as platelet dense granules and melanosomes. In concert with the AP-3 complex, the BLOC-1 complex is required to target membrane protein cargos into vesicles assembled at cell bodies for delivery into neurites and nerve terminals. The BLOC-1 complex, in association with SNARE proteins, is also proposed to be involved in neurite extension. Associates with the BLOC-2 complex to facilitate the transport of TYRP1 independent of AP-3 function. Plays a role in synaptic vesicle trafficking and in neurotransmitter release. Plays a role in the regulation of cell surface exposure of DRD2. May play a role in actin cytoskeleton reorganization and neurite outgrowth. May modulate MAPK8 phosphorylation. Appears to promote neuronal transmission and viability through regulating the expression of SNAP25 and SYN1, modulating PI3-kinase-Akt signaling and influencing glutamatergic release. Regulates the expression of SYN1 through binding to its promoter. Modulates prefrontal cortical activity via the dopamine/D2 pathway. The protein is Dysbindin (Dtnbp1) of Rattus norvegicus (Rat).